The sequence spans 314 residues: Methionyl-tRNA formyltransferase (314 aa).

A (6S)-5,6,7,8-tetrahydrofolate-binding site is contributed by 113–116 (SLLP).

Belongs to the Fmt family.

It catalyses the reaction L-methionyl-tRNA(fMet) + (6R)-10-formyltetrahydrofolate = N-formyl-L-methionyl-tRNA(fMet) + (6S)-5,6,7,8-tetrahydrofolate + H(+). Its function is as follows. Attaches a formyl group to the free amino group of methionyl-tRNA(fMet). The formyl group appears to play a dual role in the initiator identity of N-formylmethionyl-tRNA by promoting its recognition by IF2 and preventing the misappropriation of this tRNA by the elongation apparatus. This Pseudomonas savastanoi pv. phaseolicola (strain 1448A / Race 6) (Pseudomonas syringae pv. phaseolicola (strain 1448A / Race 6)) protein is Methionyl-tRNA formyltransferase.